The primary structure comprises 390 residues: Probable tRNA sulfurtransferase (390 aa).

In terms of domain architecture, THUMP spans 58–161; that stretch reads EAVARRLQRV…DEGAYIYSRI (104 aa). Residues 179 to 180, 204 to 205, Arg-261, Gly-283, and Gln-292 each bind ATP; these read LI and HF.

This sequence belongs to the ThiI family.

The protein localises to the cytoplasm. It catalyses the reaction [ThiI sulfur-carrier protein]-S-sulfanyl-L-cysteine + a uridine in tRNA + 2 reduced [2Fe-2S]-[ferredoxin] + ATP + H(+) = [ThiI sulfur-carrier protein]-L-cysteine + a 4-thiouridine in tRNA + 2 oxidized [2Fe-2S]-[ferredoxin] + AMP + diphosphate. The catalysed reaction is [ThiS sulfur-carrier protein]-C-terminal Gly-Gly-AMP + S-sulfanyl-L-cysteinyl-[cysteine desulfurase] + AH2 = [ThiS sulfur-carrier protein]-C-terminal-Gly-aminoethanethioate + L-cysteinyl-[cysteine desulfurase] + A + AMP + 2 H(+). It functions in the pathway cofactor biosynthesis; thiamine diphosphate biosynthesis. Its function is as follows. Catalyzes the ATP-dependent transfer of a sulfur to tRNA to produce 4-thiouridine in position 8 of tRNAs, which functions as a near-UV photosensor. Also catalyzes the transfer of sulfur to the sulfur carrier protein ThiS, forming ThiS-thiocarboxylate. This is a step in the synthesis of thiazole, in the thiamine biosynthesis pathway. The sulfur is donated as persulfide by IscS. This chain is Probable tRNA sulfurtransferase, found in Moorella thermoacetica (strain ATCC 39073 / JCM 9320).